A 1506-amino-acid polypeptide reads, in one-letter code: ABC transporter C family member 9 (1506 aa).

Transmembrane regions (helical) follow at residues 37-57 (MQVT…FGVV), 84-104 (ISLL…LLLF), 116-136 (VSVF…SVVV), 150-170 (MLRS…AHFI), 179-199 (FQDY…AVSI), 315-335 (AINA…PYLI), 350-370 (LNHG…ETVT), 427-447 (FIWY…AIYI), 452-472 (LGLG…CNYP), 541-561 (FILW…CMLM), and 567-587 (AGAV…IFGL). The ABC transmembrane type-1 1 domain maps to 314–596 (AAINAVFAVV…LPDLLSALVQ (283 aa)). Positions 630–853 (VEIENGAFSW…NIGFEVLVGA (224 aa)) constitute an ABC transporter 1 domain. Residue 665 to 672 (GAVGSGKS) participates in ATP binding. Transmembrane regions (helical) follow at residues 934–956 (LLVP…SNYW), 976–996 (ILLV…ARTI), 1048–1068 (MAVK…TIFV), 1167–1187 (LSHF…EGVI), and 1191–1211 (IAGL…TVIW). An ABC transmembrane type-1 2 domain is found at 936–1218 (VPFIILAQSC…VIWNICNAEN (283 aa)). The ABC transporter 2 domain occupies 1257 to 1489 (FRDLQVRYAE…EDSFFSKLIK (233 aa)). 1289–1296 (GRTGSGKS) provides a ligand contact to ATP.

Belongs to the ABC transporter superfamily. ABCC family. Conjugate transporter (TC 3.A.1.208) subfamily. As to expression, ubiquitous.

It localises to the membrane. It catalyses the reaction ATP + H2O + xenobioticSide 1 = ADP + phosphate + xenobioticSide 2.. In terms of biological role, pump for glutathione S-conjugates. The chain is ABC transporter C family member 9 (ABCC9) from Arabidopsis thaliana (Mouse-ear cress).